The chain runs to 1029 residues: Beta-galactosidase 2 (1029 aa).

Positions 104 and 203 each coordinate substrate. Residue Asp-203 coordinates Na(+). Mg(2+)-binding residues include Glu-418, His-420, and Glu-463. Residues Glu-463 and 539–542 each bind substrate; that span reads EYAH. Glu-463 (proton donor) is an active-site residue. Glu-539 functions as the Nucleophile in the catalytic mechanism. Asn-599 lines the Mg(2+) pocket. Na(+)-binding residues include Phe-603 and Asn-606. Asn-606 and Trp-1004 together coordinate substrate.

Belongs to the glycosyl hydrolase 2 family. Homotetramer. Mg(2+) serves as cofactor. Requires Na(+) as cofactor.

The catalysed reaction is Hydrolysis of terminal non-reducing beta-D-galactose residues in beta-D-galactosides.. The sequence is that of Beta-galactosidase 2 from Enterobacter cloacae.